The sequence spans 126 residues: Aspartate 1-decarboxylase (126 aa).

Residue serine 25 is the Schiff-base intermediate with substrate; via pyruvic acid of the active site. Serine 25 bears the Pyruvic acid (Ser) mark. Threonine 57 contacts substrate. Tyrosine 58 serves as the catalytic Proton donor. Glycine 73–alanine 75 contacts substrate.

This sequence belongs to the PanD family. Heterooctamer of four alpha and four beta subunits. Pyruvate serves as cofactor. Is synthesized initially as an inactive proenzyme, which is activated by self-cleavage at a specific serine bond to produce a beta-subunit with a hydroxyl group at its C-terminus and an alpha-subunit with a pyruvoyl group at its N-terminus.

The protein resides in the cytoplasm. The enzyme catalyses L-aspartate + H(+) = beta-alanine + CO2. It functions in the pathway cofactor biosynthesis; (R)-pantothenate biosynthesis; beta-alanine from L-aspartate: step 1/1. In terms of biological role, catalyzes the pyruvoyl-dependent decarboxylation of aspartate to produce beta-alanine. In Alcanivorax borkumensis (strain ATCC 700651 / DSM 11573 / NCIMB 13689 / SK2), this protein is Aspartate 1-decarboxylase.